Reading from the N-terminus, the 115-residue chain is NADH-ubiquinone oxidoreductase chain 3 (115 aa).

3 helical membrane-spanning segments follow: residues 4 to 24 (LLTMLTNITLSTLLISIAFWL), 55 to 75 (FFLVAITFLLFDLEIALLLPI), and 84 to 104 (INTMTLTAFILVSILALGLAY).

It belongs to the complex I subunit 3 family. As to quaternary structure, core subunit of respiratory chain NADH dehydrogenase (Complex I) which is composed of 45 different subunits. Interacts with TMEM186. Interacts with TMEM242.

Its subcellular location is the mitochondrion inner membrane. It catalyses the reaction a ubiquinone + NADH + 5 H(+)(in) = a ubiquinol + NAD(+) + 4 H(+)(out). Its function is as follows. Core subunit of the mitochondrial membrane respiratory chain NADH dehydrogenase (Complex I) which catalyzes electron transfer from NADH through the respiratory chain, using ubiquinone as an electron acceptor. Essential for the catalytic activity of complex I. This Neotoma lepida (Desert woodrat) protein is NADH-ubiquinone oxidoreductase chain 3.